Reading from the N-terminus, the 90-residue chain is DNA-binding protein HU-1 (90 aa).

Thr-4 carries the phosphothreonine modification.

This sequence belongs to the bacterial histone-like protein family. In terms of assembly, homodimer.

In terms of biological role, histone-like DNA-binding protein which is capable of wrapping DNA to stabilize it, and thus to prevent its denaturation under extreme environmental conditions. This Halalkalibacterium halodurans (strain ATCC BAA-125 / DSM 18197 / FERM 7344 / JCM 9153 / C-125) (Bacillus halodurans) protein is DNA-binding protein HU-1 (hup2).